The sequence spans 96 residues: Large ribosomal subunit protein eL43 (96 aa).

The segment at 41-62 (CPVCAFPKLKRAGTSIWVCDKC) adopts a C4-type zinc-finger fold.

The protein belongs to the eukaryotic ribosomal protein eL43 family. Zn(2+) is required as a cofactor.

The chain is Large ribosomal subunit protein eL43 from Methanococcus vannielii (strain ATCC 35089 / DSM 1224 / JCM 13029 / OCM 148 / SB).